A 204-amino-acid chain; its full sequence is uncharacterized protein (204 aa).

Residues 47-108 (TDSSDDEGGA…EDSDEEGEGG (62 aa)) are disordered. The segment covering 49–106 (SSDDEGGASSGDEGEASSDDEGDASSDDEEEASSDGEGVVEDEETLDAEGEDSDEEGE) has biased composition (acidic residues).

The protein localises to the mitochondrion. This is an uncharacterized protein from Paramecium tetraurelia.